Reading from the N-terminus, the 323-residue chain is Small ribosomal subunit protein mS35 (323 aa).

The interval 31 to 59 (PVPTPSLPERTPGNERPPRRKALPPRTEK) is disordered. Positions 257–321 (SSERNILETL…YKESVKRLLN (65 aa)) form a coiled coil.

It belongs to the mitochondrion-specific ribosomal protein mS35 family. In terms of assembly, component of the mitochondrial small ribosomal subunit (mt-SSU). Mature mammalian 55S mitochondrial ribosomes consist of a small (28S) and a large (39S) subunit. The 28S small subunit contains a 12S ribosomal RNA (12S mt-rRNA) and 30 different proteins. The 39S large subunit contains a 16S rRNA (16S mt-rRNA), a copy of mitochondrial valine transfer RNA (mt-tRNA(Val)), which plays an integral structural role, and 52 different proteins.

The protein resides in the mitochondrion. This chain is Small ribosomal subunit protein mS35, found in Homo sapiens (Human).